Here is a 271-residue protein sequence, read N- to C-terminus: ATP synthase subunit a (271 aa).

A run of 5 helical transmembrane segments spans residues 38–58 (FWTL…LFLA), 100–120 (LIAP…LMDL), 146–166 (DVNI…FYSI), 220–240 (LIFI…LNVP), and 242–262 (AIFH…LTIV).

Belongs to the ATPase A chain family. In terms of assembly, F-type ATPases have 2 components, CF(1) - the catalytic core - and CF(0) - the membrane proton channel. CF(1) has five subunits: alpha(3), beta(3), gamma(1), delta(1), epsilon(1). CF(0) has three main subunits: a(1), b(2) and c(9-12). The alpha and beta chains form an alternating ring which encloses part of the gamma chain. CF(1) is attached to CF(0) by a central stalk formed by the gamma and epsilon chains, while a peripheral stalk is formed by the delta and b chains.

It is found in the cell inner membrane. Its function is as follows. Key component of the proton channel; it plays a direct role in the translocation of protons across the membrane. The polypeptide is ATP synthase subunit a (Enterobacter sp. (strain 638)).